Here is a 426-residue protein sequence, read N- to C-terminus: PHD finger-containing protein 6 (426 aa).

A PHD-type zinc finger spans residues 9–59 (RSICETCGHQGWKNSLVTCSKCRIACEHCYCMRESSFETSIHFVCADCSMR). Residues Cys12, Cys15, Cys27, Cys30, His36, Cys39, Cys53, and Cys56 each coordinate Zn(2+). 2 disordered regions span residues 122-144 (TFRV…TAGF) and 185-205 (RQAS…GDGA).

As to quaternary structure, interacts directly with AIPP3/BDT1.

Together with AIPP3/BDT1, cooperates to form a BAH-PHD bivalent histone reader complex able to read histone H3 lysine 27 trimethylation (H3K27me3) histone marks in order to regulate transcription, especially to prevent early flowering; promotes AIPP3/BDT1 binding to H3K27me3. This Arabidopsis thaliana (Mouse-ear cress) protein is PHD finger-containing protein 6.